The primary structure comprises 218 residues: MGNITAKLVKDLRDKTGAGMMDCKKALNETEGNLDKALEWLRKKGIASAEKKSGRVAAEGSIGSYIHTGSRVGVLLELNCETDFVARGDIFQSLLKDVSMQVAACPNVEYVSIDEIPEDVVEKEKQIEMGRDDLSGKPEQIKEKIVEGRIAKRLNELVLLSQPYIKDSSLTVEDLVKQAAAKIGENIKVRRFTRYTLGEGIEKNQMDFAEEVASMQKN.

Residues 82 to 85 form an involved in Mg(2+) ion dislocation from EF-Tu region; sequence TDFV.

It belongs to the EF-Ts family.

The protein localises to the cytoplasm. Associates with the EF-Tu.GDP complex and induces the exchange of GDP to GTP. It remains bound to the aminoacyl-tRNA.EF-Tu.GTP complex up to the GTP hydrolysis stage on the ribosome. The polypeptide is Elongation factor Ts (Prochlorococcus marinus (strain AS9601)).